Reading from the N-terminus, the 448-residue chain is Histidinol dehydrogenase (448 aa).

NAD(+) is bound by residues Y136, Q197, and N220. Residues S243, Q265, and H268 each coordinate substrate. 2 residues coordinate Zn(2+): Q265 and H268. Active-site proton acceptor residues include E333 and H334. Residues H334, D367, E421, and H426 each contribute to the substrate site. D367 contacts Zn(2+). A Zn(2+)-binding site is contributed by H426.

The protein belongs to the histidinol dehydrogenase family. Requires Zn(2+) as cofactor.

It carries out the reaction L-histidinol + 2 NAD(+) + H2O = L-histidine + 2 NADH + 3 H(+). It participates in amino-acid biosynthesis; L-histidine biosynthesis; L-histidine from 5-phospho-alpha-D-ribose 1-diphosphate: step 9/9. In terms of biological role, catalyzes the sequential NAD-dependent oxidations of L-histidinol to L-histidinaldehyde and then to L-histidine. The protein is Histidinol dehydrogenase of Pseudomonas syringae pv. tomato (strain ATCC BAA-871 / DC3000).